We begin with the raw amino-acid sequence, 330 residues long: 6-phosphogluconolactonase (330 aa).

It belongs to the cycloisomerase 2 family.

The catalysed reaction is 6-phospho-D-glucono-1,5-lactone + H2O = 6-phospho-D-gluconate + H(+). The protein operates within carbohydrate degradation; pentose phosphate pathway; D-ribulose 5-phosphate from D-glucose 6-phosphate (oxidative stage): step 2/3. In terms of biological role, catalyzes the hydrolysis of 6-phosphogluconolactone to 6-phosphogluconate. The chain is 6-phosphogluconolactonase from Erwinia tasmaniensis (strain DSM 17950 / CFBP 7177 / CIP 109463 / NCPPB 4357 / Et1/99).